The chain runs to 267 residues: 4-hydroxy-tetrahydrodipicolinate reductase (267 aa).

Residues 8-13 (GAAGRM) and D34 contribute to the NAD(+) site. R35 is an NADP(+) binding site. NAD(+)-binding positions include 98-100 (GTT) and 122-125 (AANF). H155 acts as the Proton donor/acceptor in catalysis. (S)-2,3,4,5-tetrahydrodipicolinate is bound at residue H156. The active-site Proton donor is the K159. 165–166 (GT) contributes to the (S)-2,3,4,5-tetrahydrodipicolinate binding site.

The protein belongs to the DapB family.

It localises to the cytoplasm. The enzyme catalyses (S)-2,3,4,5-tetrahydrodipicolinate + NAD(+) + H2O = (2S,4S)-4-hydroxy-2,3,4,5-tetrahydrodipicolinate + NADH + H(+). The catalysed reaction is (S)-2,3,4,5-tetrahydrodipicolinate + NADP(+) + H2O = (2S,4S)-4-hydroxy-2,3,4,5-tetrahydrodipicolinate + NADPH + H(+). It participates in amino-acid biosynthesis; L-lysine biosynthesis via DAP pathway; (S)-tetrahydrodipicolinate from L-aspartate: step 4/4. Catalyzes the conversion of 4-hydroxy-tetrahydrodipicolinate (HTPA) to tetrahydrodipicolinate. The chain is 4-hydroxy-tetrahydrodipicolinate reductase from Pseudomonas putida (strain W619).